Reading from the N-terminus, the 489-residue chain is Glutamate--tRNA ligase (489 aa).

A 'HIGH' region motif is present at residues 11 to 21 (PSPTGHLHIGN). Residues 252 to 256 (KLSKR) carry the 'KMSKS' region motif. Position 255 (Lys-255) interacts with ATP.

This sequence belongs to the class-I aminoacyl-tRNA synthetase family. Glutamate--tRNA ligase type 1 subfamily. Monomer.

The protein localises to the cytoplasm. It carries out the reaction tRNA(Glu) + L-glutamate + ATP = L-glutamyl-tRNA(Glu) + AMP + diphosphate. Its function is as follows. Catalyzes the attachment of glutamate to tRNA(Glu) in a two-step reaction: glutamate is first activated by ATP to form Glu-AMP and then transferred to the acceptor end of tRNA(Glu). This is Glutamate--tRNA ligase from Oceanobacillus iheyensis (strain DSM 14371 / CIP 107618 / JCM 11309 / KCTC 3954 / HTE831).